A 238-amino-acid chain; its full sequence is Protein FEV (238 aa).

Positions 47–127 form a DNA-binding region, ETS; it reads IQLWQFLLEL…HGKRYAYRFD (81 aa). The tract at residues 129–238 is may mediate active transcriptional repression; sequence QGLAQACQPP…AASHLGGHYH (110 aa).

This sequence belongs to the ETS family. In terms of tissue distribution, in brain, exclusively expressed in the major serotonergic neurons of the dorsal and median raphe nuclei located in the midbrain and pons. Also detected in prostate and small intestine.

It is found in the nucleus. Functionally, functions as a transcriptional regulator. According to PubMed:12761502, it functions as a transcriptional repressor. Functions in the differentiation and the maintenance of the central serotonergic neurons. May play a role in cell growth. In Homo sapiens (Human), this protein is Protein FEV (FEV).